The following is a 492-amino-acid chain: MIKLFNTLSKNVEVFKPIDEEVKIYCCGVTVYDLCHLGHARSYIAWDVLRRFLIYSDYKVKFVQNFTDIDDKILKRAKEENSSMKQVSEKNIAEFHKDMDALGIMRPDSMPKATNHICNICSFIKVLEKKGFAYARGGDVYYSVFKNKDYGKLSNQNILEQNINQQGRMTSDESNKKNNPQDFALWKKAKENEPSFDSPWGKGRPGWHIECSAMVKDELGETIDIHLGGADLIFPHHENEIAQSESANNKKLANYWLHNGMVNVNGQKMSKSLKNFTTIRDLLDSGTSPMTLRYFVLTVNYRKPLDFTDEALKSASEAWKTINVALSFFDITKKENLSIEVNETNEFVEEKYKEKINYEISQKKIKFTNALNNDLNTAGAIAIIYELAKPLKNFINQFQRIKNLDINTNEKFHLRETLKTLEELTQVLGLKKEEIIIENKITEEQIISLINKRLIAKKGRDYAEADKIRNSLKEKGIELIDQSTELTTWVRL.

A Zn(2+)-binding site is contributed by C27. The 'HIGH' region motif lies at 29-39 (VTVYDLCHLGH). Residues C211, H236, and E240 each coordinate Zn(2+). The short motif at 268 to 272 (KMSKS) is the 'KMSKS' region element. Position 271 (K271) interacts with ATP.

This sequence belongs to the class-I aminoacyl-tRNA synthetase family. As to quaternary structure, monomer. The cofactor is Zn(2+).

The protein localises to the cytoplasm. The enzyme catalyses tRNA(Cys) + L-cysteine + ATP = L-cysteinyl-tRNA(Cys) + AMP + diphosphate. In Prochlorococcus marinus (strain MIT 9515), this protein is Cysteine--tRNA ligase.